The chain runs to 186 residues: MSLPLHPSLNNGITKGSANFSGGKLRCKCSSSPVEVTLAGNVAHNHACGCSKCWKPEGAIFSVIGVIPKEQVSVTANADKLYIVDESAAIQRHACSGCGVHLYGRIEKEHPFKGLDFVHTELSSEKGWQEPQFAAFVSSIIEQGFDPSKMDAVRAQFKSIGLETYDALNPPLMDAIASWTAQKAKI.

A CENP-V/GFA domain is found at 20–166; sequence FSGGKLRCKC…FKSIGLETYD (147 aa). Zn(2+) contacts are provided by cysteine 27, cysteine 29, cysteine 48, cysteine 50, cysteine 53, cysteine 95, and cysteine 98.

Belongs to the Gfa family. The cofactor is Zn(2+).

The enzyme catalyses S-(hydroxymethyl)glutathione = glutathione + formaldehyde. Its pathway is one-carbon metabolism; formaldehyde degradation; formate from formaldehyde (glutathione route): step 1/3. In terms of biological role, catalyzes the condensation of formaldehyde and glutathione to S-hydroxymethylglutathione. In Fusarium vanettenii (strain ATCC MYA-4622 / CBS 123669 / FGSC 9596 / NRRL 45880 / 77-13-4) (Fusarium solani subsp. pisi), this protein is Putative glutathione-dependent formaldehyde-activating enzyme.